A 263-amino-acid polypeptide reads, in one-letter code: H-2 class II histocompatibility antigen, A-K beta chain (263 aa).

Residues 1–27 (MALQIPSLLLLAAVVVLTVLSSPGTEG) form the signal peptide. The beta-1 stretch occupies residues 28–120 (GNSERHFVHQ…TETPTSLRRL (93 aa)). The Extracellular portion of the chain corresponds to 28-224 (GNSERHFVHQ…RAQSESARSK (197 aa)). 2 disulfides stabilise this stretch: cysteine 42–cysteine 104 and cysteine 143–cysteine 199. Asparagine 46 carries N-linked (GlcNAc...) asparagine glycosylation. Residues 121 to 214 (EQPSVVISLS…SLKSPITVEW (94 aa)) are beta-2. The Ig-like C1-type domain maps to 123–211 (PSVVISLSRT…EHPSLKSPIT (89 aa)). The segment at 215–224 (RAQSESARSK) is connecting peptide. A helical membrane pass occupies residues 225-245 (MLSGIGGCVLGVIFLGLGLFI). The Cytoplasmic portion of the chain corresponds to 246–263 (RHRSQKGPRGPPPAGLLQ).

The protein belongs to the MHC class II family. Post-translationally, ubiquitinated in immature dendritic cells leading to down-regulation of MHC class II.

It localises to the membrane. The chain is H-2 class II histocompatibility antigen, A-K beta chain (H2-Ab1) from Mus musculus (Mouse).